A 461-amino-acid chain; its full sequence is Tubulin gamma chain (461 aa).

Residue 142 to 148 (AGGTGSG) coordinates GTP.

Belongs to the tubulin family.

The protein localises to the cytoplasm. The protein resides in the cytoskeleton. It localises to the microtubule organizing center. Its subcellular location is the spindle pole body. Its function is as follows. Tubulin is the major constituent of microtubules. The gamma chain is found at microtubule organizing centers (MTOC) such as the spindle poles or the centrosome, suggesting that it is involved in the minus-end nucleation of microtubule assembly. The polypeptide is Tubulin gamma chain (tbg) (Neurospora crassa (strain ATCC 24698 / 74-OR23-1A / CBS 708.71 / DSM 1257 / FGSC 987)).